Reading from the N-terminus, the 68-residue chain is Large ribosomal subunit protein uL29 (68 aa).

This sequence belongs to the universal ribosomal protein uL29 family.

This is Large ribosomal subunit protein uL29 (rpl29) from Archaeoglobus fulgidus (strain ATCC 49558 / DSM 4304 / JCM 9628 / NBRC 100126 / VC-16).